A 358-amino-acid chain; its full sequence is Methylthioribose-1-phosphate isomerase (358 aa).

Residues 54 to 56 (RGA), Arg96, and Gln205 contribute to the substrate site. The active-site Proton donor is the Asp246. 256–257 (NK) is a substrate binding site.

The protein belongs to the eIF-2B alpha/beta/delta subunits family. MtnA subfamily.

It carries out the reaction 5-(methylsulfanyl)-alpha-D-ribose 1-phosphate = 5-(methylsulfanyl)-D-ribulose 1-phosphate. The protein operates within amino-acid biosynthesis; L-methionine biosynthesis via salvage pathway; L-methionine from S-methyl-5-thio-alpha-D-ribose 1-phosphate: step 1/6. Functionally, catalyzes the interconversion of methylthioribose-1-phosphate (MTR-1-P) into methylthioribulose-1-phosphate (MTRu-1-P). This chain is Methylthioribose-1-phosphate isomerase, found in Pseudomonas savastanoi pv. phaseolicola (strain 1448A / Race 6) (Pseudomonas syringae pv. phaseolicola (strain 1448A / Race 6)).